The following is a 73-amino-acid chain: Sec-independent protein translocase protein TatA (73 aa).

The chain crosses the membrane as a helical span at residues 1–21; sequence MGSFSIGHWLIVLAIIVLLFG. Residues 43–73 form a disordered region; it reads MEDTTPEKSEKVEHKEESATSQKIEETTKNA.

The protein belongs to the TatA/E family. The Tat system comprises two distinct complexes: a TatABC complex, containing multiple copies of TatA, TatB and TatC subunits, and a separate TatA complex, containing only TatA subunits. Substrates initially bind to the TatABC complex, which probably triggers association of the separate TatA complex to form the active translocon.

It is found in the cell inner membrane. Its function is as follows. Part of the twin-arginine translocation (Tat) system that transports large folded proteins containing a characteristic twin-arginine motif in their signal peptide across membranes. TatA could form the protein-conducting channel of the Tat system. This chain is Sec-independent protein translocase protein TatA, found in Campylobacter concisus (strain 13826).